The sequence spans 332 residues: Transcription factor ZEB2 (332 aa).

The tract at residues 1–37 (MQSTESFHALPTRSDVEDPNERRKIQNRIAQKKHRQK) is disordered. Over residues 14–24 (SDVEDPNERRK) the composition is skewed to basic and acidic residues. The 34-residue stretch at 17-50 (EDPNERRKIQNRIAQKKHRQKMKRRIEELETKVN) folds into the bZIP domain. Residues 21–43 (ERRKIQNRIAQKKHRQKMKRRIE) form a basic motif region. A leucine-zipper region spans residues 45–52 (LETKVNNQ). Residues 106-170 (MHDSPRPNQQ…EGSLPTRQHD (65 aa)) are disordered. Positions 111 to 134 (RPNQQQRLSVSGMPSSPTSTSNVA) are enriched in polar residues. A compositionally biased stretch (low complexity) spans 143–155 (HSSASNHLSSLSL). The span at 160–170 (TEGSLPTRQHD) shows a compositional bias: polar residues.

The protein belongs to the bZIP family.

It localises to the nucleus. Its function is as follows. Transcription factor that specifically controls transcription of the zearalenone biosynthesis cluster genes. The chain is Transcription factor ZEB2 from Gibberella zeae (strain ATCC MYA-4620 / CBS 123657 / FGSC 9075 / NRRL 31084 / PH-1) (Wheat head blight fungus).